The primary structure comprises 541 residues: Chaperonin GroEL 2 (541 aa).

ATP-binding positions include threonine 29–proline 32, aspartate 86–threonine 90, glycine 413, asparagine 478–alanine 480, and aspartate 494.

Belongs to the chaperonin (HSP60) family. Forms a cylinder of 14 subunits composed of two heptameric rings stacked back-to-back. Interacts with the co-chaperonin GroES.

It localises to the cytoplasm. It catalyses the reaction ATP + H2O + a folded polypeptide = ADP + phosphate + an unfolded polypeptide.. In terms of biological role, together with its co-chaperonin GroES, plays an essential role in assisting protein folding. The GroEL-GroES system forms a nano-cage that allows encapsulation of the non-native substrate proteins and provides a physical environment optimized to promote and accelerate protein folding. This Corynebacterium jeikeium (strain K411) protein is Chaperonin GroEL 2.